The following is a 417-amino-acid chain: Histidinol-phosphate aminotransferase 1, chloroplastic (417 aa).

Residues 1–40 (MGVINVQGSPSFSIHSSESNLRKSRALKKPFCSIRNRVYC) constitute a chloroplast transit peptide. Alanine 41 is subject to N-acetylalanine. Lysine 277 carries the N6-(pyridoxal phosphate)lysine modification.

The protein belongs to the class-II pyridoxal-phosphate-dependent aminotransferase family. Histidinol-phosphate aminotransferase subfamily. Homodimer. The cofactor is pyridoxal 5'-phosphate. Expressed in both vegetative and reproductive tissues.

The protein resides in the plastid. Its subcellular location is the chloroplast. It catalyses the reaction L-histidinol phosphate + 2-oxoglutarate = 3-(imidazol-4-yl)-2-oxopropyl phosphate + L-glutamate. The protein operates within amino-acid biosynthesis; L-histidine biosynthesis; L-histidine from 5-phospho-alpha-D-ribose 1-diphosphate: step 7/9. The chain is Histidinol-phosphate aminotransferase 1, chloroplastic (HISN6A) from Arabidopsis thaliana (Mouse-ear cress).